A 324-amino-acid chain; its full sequence is Quinolinate synthase (324 aa).

Residues His44 and Ser62 each coordinate iminosuccinate. Cys107 lines the [4Fe-4S] cluster pocket. Iminosuccinate is bound by residues Tyr133 to Asn135 and Ser150. Cys192 is a [4Fe-4S] cluster binding site. Residues His218–Glu220 and Thr235 each bind iminosuccinate. Residue Cys278 coordinates [4Fe-4S] cluster.

Belongs to the quinolinate synthase family. Type 2 subfamily. [4Fe-4S] cluster serves as cofactor.

The protein resides in the cytoplasm. The catalysed reaction is iminosuccinate + dihydroxyacetone phosphate = quinolinate + phosphate + 2 H2O + H(+). Its pathway is cofactor biosynthesis; NAD(+) biosynthesis; quinolinate from iminoaspartate: step 1/1. Its function is as follows. Catalyzes the condensation of iminoaspartate with dihydroxyacetone phosphate to form quinolinate. In Leptospira interrogans serogroup Icterohaemorrhagiae serovar copenhageni (strain Fiocruz L1-130), this protein is Quinolinate synthase.